The following is a 1248-amino-acid chain: MGKDQELLEAARTGNVALVEKLLSGRKGGILGGGSGPLPLSNLLSIWRGPNVNCTDSSGYTALHHAALNGHKDIVLKLLQYEASTNVADNKGYFPIHLAAWKGDVEIVKILIHHGPSHSRVNEQNNENETALHCAAQYGHSEVVAVLLEELTDPTIRNSKLETPLDLAALYGRLRVVKMIISAHPNLMSCNTRKHTPLHLAARNGHKAVVQVLLEAGMDVSCQTEKGSALHEAALFGKVDVVRVLLETGIDANIKDSLGRTVLDILKEHPSQKSLQIATLLQEYLEGVGRSTVLEEPVQEDATQETHISSPVESPSQKTKSETVTGELSKLLDEIKLCQEKDYSFEDLCHTISDHYLDNLSKISEEELGKNGSQSVRTSSTINLSPGEVEEEDDDENTCGPSGLWEALTPCNGCRNLGFPMLAQESYPKKRNYTMEIVPSASLDTFPSENENFLCDLMDTAVTKKPCSLEIARAPSPRTDNASEVAVTTPGTSNHRNSSTGPTPDCSPPSPDTALKNIVKVIRPQPKQRTSIVSSLDFHRMNHNQEYFEINTSTGCTSFTASPPASPPTSSVGTTEVKNEGTNHTDDLSRQDDNDPPKEYDPGQFAGLLHGSSPACESPENPFHLYGKREQCEKGQDEVSLANSPLPFKQSPIENNSEPLVKKIKPKVVSRTIFHKKSNQLENHTIVGTRSTRSGSRNGDQWVMNAGGFVERACTLGRIRSLPKALIDMHLSKSVSKSDSDLIAYPSNEKTSRVNWSESSTAEHSSKGNSERTPSFTSEWEEIDKIMSSIDVGINNELKEMNGETTRPRCPVQTVGQWLESIGLPQYENHLMANGFDNVQFMGSNVMEDQDLLEIGILNSGHRQRILQAIQLLPKMRPIGHDGYHPTSVAEWLDSIELGDYTKAFLINGYTSMDLLKKIWEVELINVLKINLIGHRKRILASLGDRLHDDPPQKPPRSITLREPSGNHTPPQLSPSLSQSTYTTGGSLDVPHIIMQGDARRRRNENYFDDIPRSKLERQMAQTGDWGEPSITLRPPNEATASTPVQYWQHHPEKLIFQSCDYKAFYLGSMLIKELRGTESTQDACAKMRANCQKSTEQMKKVPTIILSVSYKGVKFIDATNKNIIAEHEIRNISCAAQDPEDLSTFAYITKDLKSNHHYCHVFTAFDVNLAYEIILTLGQAFEVAYQLALQARKGGHSSTLPESFENKPSKPIPKPRVSIRKSVDLLHASHTGQEPSERHTEEALRKF.

7 ANK repeats span residues 2–31, 58–87, 91–120, 127–156, 160–189, 193–222, and 225–254; these read GKDQ…GGIL, SGYT…STNV, KGYF…SHSR, ENET…DPTI, KLET…NLMS, RKHT…DVSC, and EKGS…DANI. A disordered region spans residues 296–322; that stretch reads EPVQEDATQETHISSPVESPSQKTKSE. A compositionally biased stretch (polar residues) spans 305 to 322; it reads ETHISSPVESPSQKTKSE. A phosphoserine mark is found at serine 309, serine 310, serine 314, serine 353, and serine 364. Disordered regions lie at residues 367–400, 474–514, and 558–623; these read ELGK…NTCG, APSP…PDTA, and SFTA…ENPF. The segment covering 371 to 384 has biased composition (polar residues); sequence NGSQSVRTSSTINL. The segment covering 388-397 has biased composition (acidic residues); it reads EVEEEDDDEN. A Phosphothreonine modification is found at threonine 503. Phosphoserine is present on residues serine 507 and serine 510. Residues 558–575 show a composition bias toward low complexity; that stretch reads SFTASPPASPPTSSVGTT. A compositionally biased stretch (basic and acidic residues) spans 577-601; the sequence is VKNEGTNHTDDLSRQDDNDPPKEYD. A Phosphoserine modification is found at serine 738. Residues 749 to 777 form a disordered region; sequence EKTSRVNWSESSTAEHSSKGNSERTPSFT. Positions 753–763 are enriched in polar residues; that stretch reads RVNWSESSTAE. A Phosphothreonine modification is found at threonine 773. The residue at position 775 (serine 775) is a Phosphoserine. SAM domains lie at 810-876 and 884-949; these read CPVQ…LPKM and YHPT…RLHD. Residue tyrosine 901 is modified to Phosphotyrosine. The Nuclear localization signal motif lies at 935–938; sequence HRKR. A disordered region spans residues 944 to 989; it reads GDRLHDDPPQKPPRSITLREPSGNHTPPQLSPSLSQSTYTTGGSLD. Over residues 969 to 984 the composition is skewed to low complexity; the sequence is TPPQLSPSLSQSTYTT. Serine 974 carries the post-translational modification Phosphoserine. Tyrosine 1007 carries the post-translational modification Phosphotyrosine. One can recognise a PID domain in the interval 1056–1213; it reads IFQSCDYKAF…SFENKPSKPI (158 aa). The interval 1197–1248 is disordered; it reads HSSTLPESFENKPSKPIPKPRVSIRKSVDLLHASHTGQEPSERHTEEALRKF. A compositionally biased stretch (basic and acidic residues) spans 1236–1248; that stretch reads PSERHTEEALRKF.

Isoform 3 interacts with DLG4. Interacts with EPHA8. Isoform 2 interacts with COIL. Isoform 4 interacts with APP and EPHA8. Isoform 6 interacts with EPHA8. Isoform 3 nuclear translocation requires an NMDAR-dependent proteolytic cleavage. In terms of tissue distribution, highly expressed in marrow from patients with pre-B ALL associated with the t(1;19) translocation. Strongly expressed in brain and testis. Expressed in fetal brain. Isoform 4 is highly expressed in brain (at protein level). Isoform 6 is expressed in brain and several cancer cell lines.

It localises to the cytoplasm. The protein resides in the nucleus. The protein localises to the postsynaptic density. Its subcellular location is the cell projection. It is found in the dendritic spine. It localises to the cajal body. Isoform 2 may participate in the regulation of nucleoplasmic coilin protein interactions in neuronal and transformed cells. Its function is as follows. Isoform 3 can regulate global protein synthesis by altering nucleolar numbers. In terms of biological role, isoform 4 may play a role as a modulator of APP processing. Overexpression can down-regulate APP processing. This is Ankyrin repeat and sterile alpha motif domain-containing protein 1B (ANKS1B) from Homo sapiens (Human).